Reading from the N-terminus, the 363-residue chain is MSGNTYGKLFTVTTAGESHGPALVAIVDGCPPGLEISLADLQHDLDRRKPGTSRHTTQRQEPDEVEILSGVFEGRTTGCSIGLLIRNTDQKSKDYSAIKDLFRPAHADYTYHHKYGIRDYRGGGRSSARETAMRVAAGAIAKKYLATQGIQVRGYMSQLGPIEIPFKTWDSVQDNAFFSPDPDKVPELEAYMDQLRRDQDSVGAKITVVAEGVMPGLGEPIFDRLDAELAHALMSINAVKGVEIGAGFASIAQRGTEHRDELTPEGFLSNNAGGILGGISSGQPIVAHLALKPTSSITVPGRSIDVDGNPVDVITKGRHDPCVGIRATPIAEAMMAIVLMDHLLRHRAQNAEVKVATPVLGQL.

Residues Arg48 and Arg54 each coordinate NADP(+). FMN is bound by residues 125 to 127 (RSS), 237 to 238 (NA), Gly277, 292 to 296 (KPTSS), and Arg318.

It belongs to the chorismate synthase family. In terms of assembly, homotetramer. Requires FMNH2 as cofactor.

The enzyme catalyses 5-O-(1-carboxyvinyl)-3-phosphoshikimate = chorismate + phosphate. It participates in metabolic intermediate biosynthesis; chorismate biosynthesis; chorismate from D-erythrose 4-phosphate and phosphoenolpyruvate: step 7/7. Catalyzes the anti-1,4-elimination of the C-3 phosphate and the C-6 proR hydrogen from 5-enolpyruvylshikimate-3-phosphate (EPSP) to yield chorismate, which is the branch point compound that serves as the starting substrate for the three terminal pathways of aromatic amino acid biosynthesis. This reaction introduces a second double bond into the aromatic ring system. The polypeptide is Chorismate synthase (Pseudomonas putida (strain W619)).